A 123-amino-acid polypeptide reads, in one-letter code: Protein Wnt-7b (123 aa).

Residue Ser1 is the site of O-palmitoleoyl serine; by PORCN attachment. A disordered linker region spans residues 33-61 (VEVVRASRLRQPTFLKIKQIRSYQKPMET). The cysteines at positions 89 and 104 are disulfide-linked. Asn90 carries an N-linked (GlcNAc...) asparagine glycan.

It belongs to the Wnt family. Palmitoleoylation is required for efficient binding to frizzled receptors. Depalmitoleoylation leads to Wnt signaling pathway inhibition.

It is found in the secreted. The protein resides in the extracellular space. The protein localises to the extracellular matrix. Ligand for members of the frizzled family of seven transmembrane receptors that functions in the canonical Wnt/beta-catenin signaling pathway. Required for normal fusion of the chorion and the allantois during placenta development. Required for central nervous system (CNS) angiogenesis and blood-brain barrier regulation. This is Protein Wnt-7b (WNT-7B) from Sceloporus occidentalis (Western fence lizard).